The following is a 168-amino-acid chain: Protein-export protein SecB (168 aa).

The tract at residues 1-21 (MADQPSGNNDAKQAETNGNTV) is disordered.

This sequence belongs to the SecB family. Homotetramer, a dimer of dimers. One homotetramer interacts with 1 SecA dimer.

The protein resides in the cytoplasm. One of the proteins required for the normal export of preproteins out of the cell cytoplasm. It is a molecular chaperone that binds to a subset of precursor proteins, maintaining them in a translocation-competent state. It also specifically binds to its receptor SecA. The sequence is that of Protein-export protein SecB from Chelativorans sp. (strain BNC1).